The chain runs to 286 residues: ATP synthase gamma chain (286 aa).

The protein belongs to the ATPase gamma chain family. In terms of assembly, F-type ATPases have 2 components, CF(1) - the catalytic core - and CF(0) - the membrane proton channel. CF(1) has five subunits: alpha(3), beta(3), gamma(1), delta(1), epsilon(1). CF(0) has three main subunits: a, b and c.

The protein resides in the cell inner membrane. In terms of biological role, produces ATP from ADP in the presence of a proton gradient across the membrane. The gamma chain is believed to be important in regulating ATPase activity and the flow of protons through the CF(0) complex. The sequence is that of ATP synthase gamma chain from Shewanella baltica (strain OS223).